Reading from the N-terminus, the 87-residue chain is Small ribosomal subunit protein uS17 (87 aa).

The protein belongs to the universal ribosomal protein uS17 family. Part of the 30S ribosomal subunit.

Its function is as follows. One of the primary rRNA binding proteins, it binds specifically to the 5'-end of 16S ribosomal RNA. This Staphylococcus carnosus (strain TM300) protein is Small ribosomal subunit protein uS17.